A 120-amino-acid chain; its full sequence is Holo-[acyl-carrier-protein] synthase (120 aa).

Mg(2+)-binding residues include D8 and E58.

Belongs to the P-Pant transferase superfamily. AcpS family. It depends on Mg(2+) as a cofactor.

The protein resides in the cytoplasm. The catalysed reaction is apo-[ACP] + CoA = holo-[ACP] + adenosine 3',5'-bisphosphate + H(+). Transfers the 4'-phosphopantetheine moiety from coenzyme A to a Ser of acyl-carrier-protein. The polypeptide is Holo-[acyl-carrier-protein] synthase (Limosilactobacillus reuteri (strain DSM 20016) (Lactobacillus reuteri)).